A 450-amino-acid polypeptide reads, in one-letter code: Crinkler effector protein 63 (450 aa).

Positions 1–17 (MVKLFCAIVGAAGSAFP) are cleaved as a signal peptide. Positions 18-55 (VDIDAGQSAGDLKDAIKAKNPATITCDAKDLQLSLAKT) are LQLFLAK domain. Residues 58–117 (GAWLPDDDQAALDLEDGKVHEDIQALIDGEKMKATWTIEDVLTANNMTKRKGRAPKSRQI) are DWL domain. A glycan (N-linked (GlcNAc...) asparagine) is linked at Asn103. An HVLVXXP motif motif is present at residues 118–124 (HVLVVVP). Residues 125-450 (EGAFGSASET…RSIPTFSYFS (326 aa)) are effector domain. A Nuclear localization signal (NLS) motif is present at residues 218–224 (QRKRYRR). Asn342 is a glycosylation site (N-linked (GlcNAc...) asparagine).

The protein belongs to the Crinkler effector family. As to quaternary structure, forms a homodimer via an inverted association manner. Forms heterodimers with CRN79 and CRN115.

It is found in the secreted. The protein resides in the host nucleus. Its subcellular location is the host nucleoplasm. Its function is as follows. Secreted effector that, with CRN115, is critical to pathogenesis by modulating host defenses. Induces cell death in plant host cells. Suppresses callose deposition and affects expression of defense-related genes including two salicylic acid (SA) signal-induced and antimicrobial PR genes (PR1 and PR2), and genes involved in jasmonic acid (JA)/ethylene (ET)-mediated defense pathway (ERF1, ORA59, PDF1.2). CRN115 and CRN63 may share the same molecular host targets that are involved in the cell death signal transduction pathway and that their differential activities are dependent on plant nuclear localization or not. Does not affect MAPK activation and BIK1 phosphorylation and acts downstream of the MAPK cascades in PTI signaling. The chain is Crinkler effector protein 63 from Phytophthora sojae (strain P6497) (Soybean stem and root rot agent).